The primary structure comprises 1774 residues: Collagen alpha-1(XVIII) chain (1774 aa).

The signal sequence occupies residues methionine 1–alanine 26. The tract at residues aspartate 27 to glycine 785 is nonhelical region 1 (NC1). 2 disordered regions span residues aspartate 47–valine 113 and leucine 218–lysine 269. Composition is skewed to polar residues over residues lysine 55 to serine 87 and leucine 244 to asparagine 256. Residues asparagine 354 and asparagine 361 are each glycosylated (N-linked (GlcNAc...) asparagine). One can recognise an FZ domain in the interval threonine 365–isoleucine 482. Cystine bridges form between cysteine 370–cysteine 433, cysteine 380–cysteine 426, cysteine 417–cysteine 455, cysteine 444–cysteine 479, and cysteine 448–cysteine 468. In terms of domain architecture, Laminin G-like spans glycine 522 to serine 704. The N-linked (GlcNAc...) asparagine glycan is linked to asparagine 585. Residues arginine 681–alanine 1458 form a disordered region. Residues glutamate 708–threonine 717 show a composition bias toward basic and acidic residues. Threonine 730 carries the phosphothreonine modification. Residues glycine 786–valine 812 are triple-helical region 1 (COL1). Positions alanine 809 to alanine 824 are enriched in low complexity. The segment at valine 813–proline 822 is nonhelical region 2 (NC2). A Collagen-like 1 domain is found at glycine 823–aspartate 878. The segment at glycine 823–serine 896 is triple-helical region 2 (COL2). Basic and acidic residues predominate over residues threonine 839–proline 855. Over residues arginine 884 to proline 895 the composition is skewed to pro residues. Residues phenylalanine 897–arginine 920 form a nonhelical region 3 (NC3) region. A glycan (O-linked (Xyl...) (chondroitin sulfate) serine) is linked at serine 910. Residues glycine 921–glycine 1042 form a triple-helical region 3 (COL3) region. Pro residues predominate over residues phenylalanine 925–proline 935. Asparagine 947 is a glycosylation site (N-linked (GlcNAc...) asparagine). Over residues alanine 951–lysine 963 the composition is skewed to low complexity. 2 consecutive Collagen-like domains span residues glycine 953–glycine 1007 and aspartate 1008–proline 1041. 2 stretches are compositionally biased toward pro residues: residues proline 967–glutamate 982 and proline 1026–proline 1041. A nonhelical region 4 (NC4) region spans residues phenylalanine 1043–aspartate 1065. Collagen-like domains lie at glycine 1066 to glycine 1117, glutamate 1118 to proline 1147, proline 1162 to glycine 1202, and glutamine 1216 to aspartate 1264. A triple-helical region 4 (COL4) region spans residues glycine 1066 to valine 1148. Over residues leucine 1138–proline 1147 the composition is skewed to pro residues. Residues isoleucine 1149–proline 1162 form a nonhelical region 5 (NC5) region. Residues glycine 1163 to isoleucine 1204 form a triple-helical region 5 (COL5) region. The interval phenylalanine 1205–lysine 1217 is nonhelical region 6 (NC6). The tract at residues glycine 1218–proline 1290 is triple-helical region 6 (COL6). The segment covering proline 1275–methionine 1289 has biased composition (pro residues). The segment at isoleucine 1291–serine 1300 is nonhelical region 7 (NC7). A compositionally biased stretch (low complexity) spans glycine 1301–proline 1317. The triple-helical region 7 (COL7) stretch occupies residues glycine 1301 to phenylalanine 1333. Residues proline 1334 to lysine 1345 are nonhelical region 8 (NC8). The segment covering phenylalanine 1338–glutamate 1362 has biased composition (basic and acidic residues). Residues glycine 1346–glycine 1369 are triple-helical region 8 (COL8). A Cell attachment site motif is present at residues arginine 1351 to aspartate 1353. The tract at residues phenylalanine 1370–proline 1376 is nonhelical region 9 (NC9). Composition is skewed to pro residues over residues proline 1376 to proline 1388, proline 1398 to proline 1407, proline 1418 to proline 1431, and proline 1441 to proline 1453. Residues glycine 1377–proline 1428 are triple-helical region 9 (COL9). Residues serine 1429–proline 1441 form a nonhelical region 10 (NC10) region. Residues glycine 1442 to serine 1459 form a triple-helical region 10 (COL10) region. A nonhelical region 11 (NC11) region spans residues alanine 1460–lysine 1774. Residues aspartate 1474–glutamate 1519 are non-collagenous domain 1 association domain. The tract at residues valine 1520–alanine 1590 is non-collagenous domain 1 hinge region. Zn(2+)-binding residues include histidine 1591, histidine 1593, aspartate 1595, histidine 1601, and aspartate 1666. Cystine bridges form between cysteine 1623–cysteine 1763 and cysteine 1725–cysteine 1755.

It belongs to the multiplexin collagen family. As to quaternary structure, forms homotrimers. Recombinant non-collagenous domain 1 has stronger affinity to NID1, HSPG2 and laminin-1:NID1 complex and lower affinity to FBLN1 and FBLN2 than endostatin. In terms of assembly, monomeric. Interacts with KDR/VEGFR2. Interacts with the ITGA5:ITGB1 complex. Interacts with NID1, HSPG2, laminin-1:NID1 complex, FBLN1 and FBLN2. In terms of processing, prolines at the third position of the tripeptide repeating unit (G-X-Y) of the triple-helical regions are hydroxylated. Undergoes proteolytic processing by CTSL/cathepsin-L and elastase-like proteases to generate both non-collagenous domain 1 trimers and endostatin monomers. In tissue extracts (brain, skeletal muscle, heart, kidney, testis and liver) predominantly bands of approximately 38 kDa are detected; recombinant non-collagenous domain 1 shows similar mobility. In vitro, several proteolytic cleavage sites in the non-collagenous domain 1 hinge region generating different endostatin-like peptides are reported. Expressed in liver, kidney, lung, skeletal muscle and testis.

It is found in the secreted. Its subcellular location is the extracellular space. The protein localises to the extracellular matrix. It localises to the basement membrane. Its function is as follows. Probably plays a major role in determining the retinal structure as well as in the closure of the neural tube. May regulate extracellular matrix-dependent motility and morphogenesis of endothelial and non-endothelial cells; the function requires homotrimerization and implicates MAPK signaling. Functionally, potently inhibits endothelial cell proliferation and angiogenesis. May inhibit angiogenesis by binding to the heparan sulfate proteoglycans involved in growth factor signaling. Inhibits VEGFA isoform VEGF165-induced endothelial cell proliferation and migration. Seems to inhibit VEGFA-mediated signaling by blocking the interaction of VEGFA to its receptor KDR/VEGFR2. Modulates endothelial cell migration in an integrin-dependent manner implicating integrin ITGA5:ITGB1 and to a lesser extent ITGAV:ITGB3 and ITGAV:ITGB5. May negatively regulate the activity of homotrimeric non-collagenous domain 1. The sequence is that of Collagen alpha-1(XVIII) chain from Mus musculus (Mouse).